Reading from the N-terminus, the 300-residue chain is 33 kDa chaperonin (300 aa).

Intrachain disulfides connect Cys235/Cys237 and Cys269/Cys272.

It belongs to the HSP33 family. Post-translationally, under oxidizing conditions two disulfide bonds are formed involving the reactive cysteines. Under reducing conditions zinc is bound to the reactive cysteines and the protein is inactive.

The protein resides in the cytoplasm. In terms of biological role, redox regulated molecular chaperone. Protects both thermally unfolding and oxidatively damaged proteins from irreversible aggregation. Plays an important role in the bacterial defense system toward oxidative stress. In Pseudomonas fluorescens (strain Pf0-1), this protein is 33 kDa chaperonin.